Here is a 485-residue protein sequence, read N- to C-terminus: Glutamyl-tRNA(Gln) amidotransferase subunit A (485 aa).

Active-site charge relay system residues include Lys79 and Ser154. The active-site Acyl-ester intermediate is the Ser178.

Belongs to the amidase family. GatA subfamily. In terms of assembly, heterotrimer of A, B and C subunits.

It catalyses the reaction L-glutamyl-tRNA(Gln) + L-glutamine + ATP + H2O = L-glutaminyl-tRNA(Gln) + L-glutamate + ADP + phosphate + H(+). In terms of biological role, allows the formation of correctly charged Gln-tRNA(Gln) through the transamidation of misacylated Glu-tRNA(Gln) in organisms which lack glutaminyl-tRNA synthetase. The reaction takes place in the presence of glutamine and ATP through an activated gamma-phospho-Glu-tRNA(Gln). This chain is Glutamyl-tRNA(Gln) amidotransferase subunit A, found in Desulforamulus reducens (strain ATCC BAA-1160 / DSM 100696 / MI-1) (Desulfotomaculum reducens).